Consider the following 239-residue polypeptide: MRIERVDDTTVKLFITYSDIEARGFSREDLWTNRKRGEEFFWSMMDEINEEEDFVVEGPLWIQVHAFEKGVEVTISKSKNEDMMNMSDDDATDQFDEQVQELLAQTLEGEDQLEELFEQRTKEKEAQGSKRQKSSARKNTRTIVVKFNDLEDVINYAYHSNPITTEFEDLLYMVDGTYYYAVHFDSHVDQEVINDSYSQLLEFAYPTDRTEVYLNDYAKIIMSHNVTAQVRRYFPETTE.

Over residues 118–128 (EQRTKEKEAQG) the composition is skewed to basic and acidic residues. The interval 118-137 (EQRTKEKEAQGSKRQKSSAR) is disordered.

The protein belongs to the MecA family. As to quaternary structure, homodimer.

Its function is as follows. Enables the recognition and targeting of unfolded and aggregated proteins to the ClpC protease or to other proteins involved in proteolysis. In Staphylococcus aureus (strain JH1), this protein is Adapter protein MecA.